We begin with the raw amino-acid sequence, 670 residues long: RxLR effector protein PSR2 (670 aa).

The signal sequence occupies residues 1 to 17 (MRLQCVVLFAALTLVAA). The RxLR-dEER signature appears at 39 to 54 (RLLRPGNPAGKEDEER). Residue Asn57 is glycosylated (N-linked (GlcNAc...) asparagine). The stretch at 79–126 (KLLKWADAKKPPETVFTRLRLDKTGTQLFDNTDFPVWAAYTRSVAQTD) is one WY1 repeat. A 7 X 93 AA tandem repeats region spans residues 79–670 (KLLKWADAKK…YSAKFKVRWG (592 aa)). An LWY2 repeat occupies 127 to 217 (SEASAVMLKT…NYMKLSNKEN (91 aa)). Residues 218-308 (PKAQTTLIAT…KYINYYNKEN (91 aa)) form an LWY3 repeat. The LWY4 repeat unit spans residues 309–399 (PDEKTTVLAK…KYTENFNLNK (91 aa)). The LWY5 repeat unit spans residues 400 to 492 (EINEQVTAIQ…KFLEKYNTAN (93 aa)). The stretch at 493–583 (PGKEQTMISG…KYLNAFNDKA (91 aa)) is one LWY6 repeat. An LWY7 repeat occupies 584 to 670 (PVKKALMIDT…YSAKFKVRWG (87 aa)).

This sequence belongs to the RxLR effector family. Interacts with host dsRNA-binding protein DRB4.

Its subcellular location is the secreted. It is found in the host cell. Its function is as follows. Secreted effector that possesses RNA silencing suppression activity by inhibiting the biogenesis of small RNAs in the host plant to promote enhanced susceptibility of host to the pathogen during infection. Interferes with secondary siRNA production by associating with host dsRNA-binding protein DRB4. Inhibits the host salicylic acid pathway during infection. The chain is RxLR effector protein PSR2 from Phytophthora sojae (Soybean stem and root rot agent).